Here is a 146-residue protein sequence, read N- to C-terminus: Hemoglobin subunit beta (146 aa).

Positions 2–146 (HWSAEEKQLI…VAHALARKYH (145 aa)) constitute a Globin domain. The heme b site is built by His-63 and His-92.

It belongs to the globin family. In terms of assembly, heterotetramer of two alpha chains and two beta chains. In terms of tissue distribution, red blood cells.

Involved in oxygen transport from the lung to the various peripheral tissues. In Phoenicopterus ruber (American flamingo), this protein is Hemoglobin subunit beta (HBB).